Consider the following 259-residue polypeptide: Ribonuclease PH (259 aa).

Residues Arg-88 and 126-128 each bind phosphate; that span reads GTR.

It belongs to the RNase PH family. As to quaternary structure, homohexameric ring arranged as a trimer of dimers.

The enzyme catalyses tRNA(n+1) + phosphate = tRNA(n) + a ribonucleoside 5'-diphosphate. Phosphorolytic 3'-5' exoribonuclease that plays an important role in tRNA 3'-end maturation. Removes nucleotide residues following the 3'-CCA terminus of tRNAs; can also add nucleotides to the ends of RNA molecules by using nucleoside diphosphates as substrates, but this may not be physiologically important. Probably plays a role in initiation of 16S rRNA degradation (leading to ribosome degradation) during starvation. The sequence is that of Ribonuclease PH from Mycolicibacterium smegmatis (strain ATCC 700084 / mc(2)155) (Mycobacterium smegmatis).